Consider the following 418-residue polypeptide: Putative methylthiotransferase HP_0285 (418 aa).

One can recognise an MTTase N-terminal domain in the interval 2–110 (KKVYFKTFGC…INALLQEKKR (109 aa)). Cys-11, Cys-45, Cys-74, Cys-144, Cys-148, and Cys-151 together coordinate [4Fe-4S] cluster. The 226-residue stretch at 130-355 (FVGKTRAFIK…KDLIFHKNKA (226 aa)) folds into the Radical SAM core domain.

Belongs to the methylthiotransferase family. It depends on [4Fe-4S] cluster as a cofactor.

The protein is Putative methylthiotransferase HP_0285 of Helicobacter pylori (strain ATCC 700392 / 26695) (Campylobacter pylori).